Here is a 481-residue protein sequence, read N- to C-terminus: RuvB-like helicase 2 (481 aa).

73–80 is a binding site for ATP; the sequence is GEPSTGKT. Residues 453–481 form a disordered region; it reads EEVERDPAAGGGAKRRVEGGGGDAQPMEH.

This sequence belongs to the RuvB family. As to quaternary structure, forms homohexameric rings. May form a dodecamer with rept made of two stacked hexameric rings. Component of the chromatin remodeling Ino80 complex. Interacts with Myc and pont. As to expression, higher expression occurs in primordia of mesoderm, anterior and posterior midgut and cephalic furrow early in gastrulation, as well as in endoderm and mesoderm lineages during germ band extension. Later in development expression is only maintained in endoderm cells. Expressed in thoracic and abdominal segment neural precursors of all embryonic chordotonal organs.

Its subcellular location is the nucleus. It carries out the reaction ATP + H2O = ADP + phosphate + H(+). In terms of biological role, acts as a transcriptional coactivator in Wg signaling caused by altered arm signaling. Pont and rept interfere antagonistically with nuclear arm signaling function, and are required to enhance or reduce arm activity, respectively. Also an essential cofactor for the normal function of Myc; required for cellular proliferation and growth. Its function is as follows. Proposed core component of the chromatin remodeling Ino80 complex which is involved in transcriptional regulation, DNA replication and probably DNA repair. The sequence is that of RuvB-like helicase 2 from Drosophila melanogaster (Fruit fly).